The primary structure comprises 259 residues: MSFIVIIPARYESSRLLGKPLMDIQGKPMVEWTWMQAKKSGATRVVIATESDRVKAVCESFGAEVCLTSERHESGTERIAEVASLLGLNDDDILVNVQGDEPLLPPDLIHQVAEGLETHPNTLMATLCEPILDVETVFDPHAVKVIRDCNNYALNFTRAPMPWSRDTFGSEPKTLPGNWPYRRHIGLYAYRSGFVKRYVEWPVCALEQVEKLEQLRVLWHGEKILVLDALCEAGVGVDTEQDLIKVRKIMANLNPDGAL.

Belongs to the KdsB family.

It localises to the cytoplasm. The catalysed reaction is 3-deoxy-alpha-D-manno-oct-2-ulosonate + CTP = CMP-3-deoxy-beta-D-manno-octulosonate + diphosphate. It functions in the pathway nucleotide-sugar biosynthesis; CMP-3-deoxy-D-manno-octulosonate biosynthesis; CMP-3-deoxy-D-manno-octulosonate from 3-deoxy-D-manno-octulosonate and CTP: step 1/1. Its pathway is bacterial outer membrane biogenesis; lipopolysaccharide biosynthesis. Its function is as follows. Activates KDO (a required 8-carbon sugar) for incorporation into bacterial lipopolysaccharide in Gram-negative bacteria. This is 3-deoxy-manno-octulosonate cytidylyltransferase 1 from Hydrogenovibrio crunogenus (strain DSM 25203 / XCL-2) (Thiomicrospira crunogena).